Here is a 998-residue protein sequence, read N- to C-terminus: Type II restriction enzyme and methyltransferase RM.Eco57I (998 aa).

In the C-terminal section; belongs to the N(4)/N(6)-methyltransferase family. Monomer.

It catalyses the reaction Endonucleolytic cleavage of DNA to give specific double-stranded fragments with terminal 5'-phosphates.. The catalysed reaction is a 2'-deoxyadenosine in DNA + S-adenosyl-L-methionine = an N(6)-methyl-2'-deoxyadenosine in DNA + S-adenosyl-L-homocysteine + H(+). Mg(2+) is absolutely required for DNA restriction. Functionally, an E, G and S subtype restriction enzyme that recognizes the (non-palindromic) double-stranded sequence 5'-CTGAAG-3' and cleaves respectively 22 bases after C-1 and 14 bases before C'-1; cleavage of lambda DNA is never complete. Also acts as a methylase that causes specific methylation on A-5 in 5'-CTGAAG-3', the other strand is methylated by the M.Eco57I methylase. This chain is Type II restriction enzyme and methyltransferase RM.Eco57I, found in Escherichia coli.